The chain runs to 119 residues: Large ribosomal subunit protein uL22c (119 aa).

This sequence belongs to the universal ribosomal protein uL22 family. Part of the 50S ribosomal subunit.

The protein localises to the plastid. Its subcellular location is the chloroplast. In terms of biological role, this protein binds specifically to 23S rRNA. Functionally, the globular domain of the protein is located near the polypeptide exit tunnel on the outside of the subunit, while an extended beta-hairpin is found that lines the wall of the exit tunnel in the center of the 70S ribosome. This Anthoceros angustus (Hornwort) protein is Large ribosomal subunit protein uL22c (rpl22).